Here is an 89-residue protein sequence, read N- to C-terminus: Small ribosomal subunit protein uS15 (89 aa).

This sequence belongs to the universal ribosomal protein uS15 family. In terms of assembly, part of the 30S ribosomal subunit. Forms a bridge to the 50S subunit in the 70S ribosome, contacting the 23S rRNA.

Its function is as follows. One of the primary rRNA binding proteins, it binds directly to 16S rRNA where it helps nucleate assembly of the platform of the 30S subunit by binding and bridging several RNA helices of the 16S rRNA. In terms of biological role, forms an intersubunit bridge (bridge B4) with the 23S rRNA of the 50S subunit in the ribosome. The chain is Small ribosomal subunit protein uS15 from Aliivibrio fischeri (strain ATCC 700601 / ES114) (Vibrio fischeri).